We begin with the raw amino-acid sequence, 66 residues long: Cold shock protein CspA (66 aa).

The region spanning Met1 to Leu66 is the CSD domain.

It is found in the cytoplasm. Functionally, involved in cold stress response. In Staphylococcus haemolyticus (strain JCSC1435), this protein is Cold shock protein CspA (cspA).